The following is a 153-amino-acid chain: Lipoprotein signal peptidase (153 aa).

Transmembrane regions (helical) follow at residues 52–72 and 81–101; these read ILAGQMWFFYVITIAVIIGIV and GQMLLGISLGLMLGGAAGNFI. Residues Asp111 and Asp129 contribute to the active site. A helical membrane pass occupies residues 124–144; it reads IFNIADSSLCVGVILLFIHML.

Belongs to the peptidase A8 family.

The protein resides in the cell membrane. The catalysed reaction is Release of signal peptides from bacterial membrane prolipoproteins. Hydrolyzes -Xaa-Yaa-Zaa-|-(S,diacylglyceryl)Cys-, in which Xaa is hydrophobic (preferably Leu), and Yaa (Ala or Ser) and Zaa (Gly or Ala) have small, neutral side chains.. It participates in protein modification; lipoprotein biosynthesis (signal peptide cleavage). In terms of biological role, this protein specifically catalyzes the removal of signal peptides from prolipoproteins. This Bacillus velezensis (strain DSM 23117 / BGSC 10A6 / LMG 26770 / FZB42) (Bacillus amyloliquefaciens subsp. plantarum) protein is Lipoprotein signal peptidase.